Reading from the N-terminus, the 342-residue chain is Muscleblind-like protein 3 (342 aa).

4 C3H1-type zinc fingers span residues 14–42, 48–74, 174–202, and 210–236; these read WLTL…HPPR, NGRV…HPPP, TDRL…HPTD, and DNSV…HPPP. Over residues 316-326 the composition is skewed to low complexity; that stretch reads PSTVSTATPPA. The interval 316 to 342 is disordered; the sequence is PSTVSTATPPASNVPYVPTTTGNQLKY. Positions 333 to 342 are enriched in polar residues; sequence PTTTGNQLKY.

This sequence belongs to the muscleblind family.

The protein resides in the nucleus. The protein localises to the cytoplasm. In terms of biological role, mediates pre-mRNA alternative splicing regulation. Acts either as activator or repressor of splicing on specific pre-mRNA targets. Inhibits cardiac troponin-T (TNNT2) pre-mRNA exon inclusion but induces insulin receptor (IR) pre-mRNA exon inclusion in muscle. Antagonizes the alternative splicing activity pattern of CELF proteins. Could inhibit terminal muscle differentiation, acting at approximately the time of myogenin induction. The sequence is that of Muscleblind-like protein 3 (Mbnl3) from Mus musculus (Mouse).